The sequence spans 255 residues: MSDYIVVKCGGSMLDQLNDLFFDCIKKLQQKYKVVIVHGGGPEIDAQLKDCNINAEKRDGLRVTPKEVMDVVQMVLCGSTNKKLVMNLQKHNLRAVGCSGCDGNLLQVQPVSEEIGYVGEVRYVETALLKGLINMNYIPVIAPVGINDNEIYNINADTAAAGIAAALSAKELIFITDVDGVLHEGKLVKKTDEFEIVNFIENGVITGGMIPKVQAALASLKMGVQKVSIVNGTKDFTEVTGECIGTTVTRGVSIA.

Residues 40-41 (GG), Arg-62, and Asn-153 contribute to the substrate site.

This sequence belongs to the acetylglutamate kinase family. ArgB subfamily.

It localises to the cytoplasm. The catalysed reaction is N-acetyl-L-glutamate + ATP = N-acetyl-L-glutamyl 5-phosphate + ADP. The protein operates within amino-acid biosynthesis; L-arginine biosynthesis; N(2)-acetyl-L-ornithine from L-glutamate: step 2/4. Its function is as follows. Catalyzes the ATP-dependent phosphorylation of N-acetyl-L-glutamate. The sequence is that of Acetylglutamate kinase from Bacillus cereus (strain AH187).